The chain runs to 378 residues: Spermidine/putrescine import ATP-binding protein PotA (378 aa).

One can recognise an ABC transporter domain in the interval 18-248 (VQLAGIRKCF…PKNLFVAGFI (231 aa)). 50–57 (GPSGCGKT) is a binding site for ATP.

Belongs to the ABC transporter superfamily. Spermidine/putrescine importer (TC 3.A.1.11.1) family. The complex is composed of two ATP-binding proteins (PotA), two transmembrane proteins (PotB and PotC) and a solute-binding protein (PotD).

The protein resides in the cell inner membrane. It carries out the reaction ATP + H2O + polyamine-[polyamine-binding protein]Side 1 = ADP + phosphate + polyamineSide 2 + [polyamine-binding protein]Side 1.. In terms of biological role, part of the ABC transporter complex PotABCD involved in spermidine/putrescine import. Responsible for energy coupling to the transport system. In Shigella boydii serotype 4 (strain Sb227), this protein is Spermidine/putrescine import ATP-binding protein PotA.